Reading from the N-terminus, the 208-residue chain is N-(5'-phosphoribosyl)anthranilate isomerase (208 aa).

It belongs to the TrpF family.

The enzyme catalyses N-(5-phospho-beta-D-ribosyl)anthranilate = 1-(2-carboxyphenylamino)-1-deoxy-D-ribulose 5-phosphate. It participates in amino-acid biosynthesis; L-tryptophan biosynthesis; L-tryptophan from chorismate: step 3/5. The sequence is that of N-(5'-phosphoribosyl)anthranilate isomerase from Chlamydia trachomatis serovar L2 (strain ATCC VR-902B / DSM 19102 / 434/Bu).